Consider the following 69-residue polypeptide: Large ribosomal subunit protein bL28 (69 aa).

This sequence belongs to the bacterial ribosomal protein bL28 family.

This Nitratidesulfovibrio vulgaris (strain DSM 19637 / Miyazaki F) (Desulfovibrio vulgaris) protein is Large ribosomal subunit protein bL28.